The sequence spans 122 residues: Cysteine proteinase inhibitor 5 (122 aa).

A signal peptide spans 1 to 26 (MTSKVVFLLLLSLVVVLLPLYASAAA). Residues 29–117 (GGWSPISNVT…RNLTSFEPAN (89 aa)) enclose the Cystatin domain. A glycan (N-linked (GlcNAc...) asparagine) is linked at Asn36. A Secondary area of contact motif is present at residues 72-76 (QVVSG). Residue Asn109 is glycosylated (N-linked (GlcNAc...) asparagine).

This sequence belongs to the cystatin family. Phytocystatin subfamily.

It localises to the secreted. Functionally, specific inhibitor of cysteine proteinases. Probably involved in the regulation of endogenous processes and in defense against pests and pathogens. The chain is Cysteine proteinase inhibitor 5 (CYS5) from Arabidopsis thaliana (Mouse-ear cress).